The primary structure comprises 412 residues: NADH-quinone oxidoreductase subunit 4 (412 aa).

Belongs to the complex I 49 kDa subunit family. As to quaternary structure, NDH-1 is composed of at least 14 different subunits, Nqo1 to Nqo14. The complex has a L-shaped structure, with the hydrophobic arm (subunits Nqo7, Nqo8, Nqo10 to Nqo14) embedded in the inner membrane and the hydrophilic peripheral arm (subunits Nqo1 to Nqo6, Nqo9) protruding into the bacterial cytoplasm. The hydrophilic domain contains all the redox centers.

The protein localises to the cell inner membrane. It carries out the reaction a quinone + NADH + 5 H(+)(in) = a quinol + NAD(+) + 4 H(+)(out). Functionally, NDH-1 shuttles electrons from NADH, via FMN and iron-sulfur (Fe-S) centers, to quinones in the respiratory chain. The immediate electron acceptor for the enzyme in this species is believed to be ubiquinone. Couples the redox reaction to proton translocation (for every two electrons transferred, four hydrogen ions are translocated across the cytoplasmic membrane), and thus conserves the redox energy in a proton gradient. This is NADH-quinone oxidoreductase subunit 4 (nqo4) from Paracoccus denitrificans.